Consider the following 643-residue polypeptide: MNANPKFLSADAHVDAAAVAPLPNSRKVYVTGSQPDIRVPMREITQADTPTGFGGEKNPPIYVYDTSGPYTDPDAKIDIRAGLPALRQRWIEARGDTEVLPGLSSQYGLERAADPATAELRFPGLHRNPRRAQAGKNVTQMHYARQGIITPEMEYIAIRENQRRAEYIESLKSSGPNGAKLAAMMGRQHPGQAFGAAAFGANALAEITPEFVRDEVARGRAIIPANINHPESEPMIIGRNFLVKINANIGNSAVTSSIGEEVDKMTWAIRWGGDTVMDLSTGKHIHETREWIIRNSPVPIGTVPIYQALEKVNGKAEDLTWEIFRDTLIEQAEQGVDYFTIHAGVRLQYVPLTANRMTGIVSRGGSIMAKWCLAHHKESFLYEHFEEICEIMKAYDVSFSLGDGLRPGSIYDANDEAQLGELKTLGELTQIAWKHDVQVMIEGPGHVPMQLIKENMDLQLDWCKEAPFYTLGPLTTDIAPGYDHITSGIGAAMIGWFGTAMLCYVTPKEHLGLPNKDDVKEGIITYKLAAHAADLAKGHPGAQVRDNALSKARFEFRWEDQFNIGLDPDKAREFHDETLPKDSAKVAHFCSMCGPHFCSMKITQDVREFAAQQGVSETEALKKGMEVKAVEFVKTGAEIYHRQ.

Residues Asn248, Met277, Tyr306, His342, 362-364, 403-406, and Glu442 contribute to the substrate site; these read SRG and DGLR. His446 provides a ligand contact to Zn(2+). Position 469 (Tyr469) interacts with substrate. His510 contributes to the Zn(2+) binding site. The [4Fe-4S] cluster site is built by Cys590, Cys593, and Cys598.

It belongs to the ThiC family. As to quaternary structure, homodimer. The cofactor is [4Fe-4S] cluster.

The catalysed reaction is 5-amino-1-(5-phospho-beta-D-ribosyl)imidazole + S-adenosyl-L-methionine = 4-amino-2-methyl-5-(phosphooxymethyl)pyrimidine + CO + 5'-deoxyadenosine + formate + L-methionine + 3 H(+). It participates in cofactor biosynthesis; thiamine diphosphate biosynthesis. Catalyzes the synthesis of the hydroxymethylpyrimidine phosphate (HMP-P) moiety of thiamine from aminoimidazole ribotide (AIR) in a radical S-adenosyl-L-methionine (SAM)-dependent reaction. This chain is Phosphomethylpyrimidine synthase, found in Burkholderia cenocepacia (strain ATCC BAA-245 / DSM 16553 / LMG 16656 / NCTC 13227 / J2315 / CF5610) (Burkholderia cepacia (strain J2315)).